The following is a 305-amino-acid chain: Oxygen-dependent coproporphyrinogen-III oxidase (305 aa).

Ser-93 contributes to the substrate binding site. Residues His-97 and His-107 each coordinate a divalent metal cation. The active-site Proton donor is the His-107. Substrate is bound at residue 109-111 (NVR). A divalent metal cation contacts are provided by His-146 and His-176. The important for dimerization stretch occupies residues 241–276 (YVEFNLVFDRGTLFGLQSGGRTESILMSLPPQVRWG). 259–261 (GGR) lines the substrate pocket.

Belongs to the aerobic coproporphyrinogen-III oxidase family. Homodimer. It depends on a divalent metal cation as a cofactor.

It is found in the cytoplasm. The catalysed reaction is coproporphyrinogen III + O2 + 2 H(+) = protoporphyrinogen IX + 2 CO2 + 2 H2O. It functions in the pathway porphyrin-containing compound metabolism; protoporphyrin-IX biosynthesis; protoporphyrinogen-IX from coproporphyrinogen-III (O2 route): step 1/1. Its function is as follows. Involved in the heme biosynthesis. Catalyzes the aerobic oxidative decarboxylation of propionate groups of rings A and B of coproporphyrinogen-III to yield the vinyl groups in protoporphyrinogen-IX. The chain is Oxygen-dependent coproporphyrinogen-III oxidase from Pseudomonas aeruginosa (strain UCBPP-PA14).